Reading from the N-terminus, the 488-residue chain is E3 ubiquitin-protein ligase TRIM34 (488 aa).

The RING-type zinc-finger motif lies at 15 to 60; it reads CPICLELLTEPLSLDCGHSLCRACITVSNKEAVTSMGGKSSCPVCG. A B box-type zinc finger spans residues 92-134; sequence KKRDLCDHHGEKLLLFCKEDRKVICWLCERSQEHRGHHTVLTE. Residues C97, H100, C119, and H125 each contribute to the Zn(2+) site. A coiled-coil region spans residues 131–239; that stretch reads VLTEEVFKEC…VRELISDVEC (109 aa). The 206-residue stretch at 283–488 folds into the B30.2/SPRY domain; that stretch reads LSRMLQMFRE…APMTLCPPSS (206 aa).

The protein belongs to the TRIM/RBCC family. As to quaternary structure, homotrimer. Interacts (via B-box and SPRY domain) with TRIM5. (Microbial infection) Interacts (via the B30.2/SPRY domain) with HIV-1 capsid complexes. Is the most abundant form. It is highly expressed in the placenta, spleen, colon and peripheral blood leukocytes.

Its subcellular location is the cytoplasm. It is found in the mitochondrion. It catalyses the reaction S-ubiquitinyl-[E2 ubiquitin-conjugating enzyme]-L-cysteine + [acceptor protein]-L-lysine = [E2 ubiquitin-conjugating enzyme]-L-cysteine + N(6)-ubiquitinyl-[acceptor protein]-L-lysine.. It functions in the pathway protein modification; protein ubiquitination. In terms of biological role, functions as antiviral protein and contributes to the defense against retroviral infections. Acts as a capsid-specific restriction factor with the help of TRIM5 and prevents infection from non-host-adapted retroviruses. During influenza A virus infection, promotes programmed cell death by targeting ZBP1 for 'Lys-63'-linked polyubiquitination. In turn, promotes ZBP1 recruitment of RIPK3 to mediate virus-induced programmed necrosis. Negatively regulates the function of mitochondria by enhancing mitochondrial depolarization leading to cytochrome c release and mitochondria-dependent apoptosis. Also promotes the formation of multinucleated giant cells by means of cell fusion and phagocytosis in epithelial cells. In Homo sapiens (Human), this protein is E3 ubiquitin-protein ligase TRIM34 (TRIM34).